The chain runs to 360 residues: mRNA cap guanine-N(7) methyltransferase (360 aa).

The disordered stretch occupies residues 1 to 62 (MSSSNSRVHE…NRHENNGNAQ (62 aa)). The segment covering 7–19 (RVHEEQPPTENRR) has biased composition (basic and acidic residues). In terms of domain architecture, mRNA cap 0 methyltransferase spans 83–358 (SPIIQLKRFN…FYLAFAFEKR (276 aa)). MRNA is bound at residue 92 to 93 (NN). S-adenosyl-L-methionine is bound by residues Lys96, Gly118, Asp140, Asp168, Gln191, and Tyr196.

The protein belongs to the class I-like SAM-binding methyltransferase superfamily. mRNA cap 0 methyltransferase family. In terms of assembly, interacts with cdk9.

Its subcellular location is the nucleus. The catalysed reaction is a 5'-end (5'-triphosphoguanosine)-ribonucleoside in mRNA + S-adenosyl-L-methionine = a 5'-end (N(7)-methyl 5'-triphosphoguanosine)-ribonucleoside in mRNA + S-adenosyl-L-homocysteine. Responsible for methylating the 5'-cap structure of mRNAs. This is mRNA cap guanine-N(7) methyltransferase (pcm1) from Schizosaccharomyces pombe (strain 972 / ATCC 24843) (Fission yeast).